Reading from the N-terminus, the 273-residue chain is Putative phosphoenolpyruvate synthase regulatory protein (273 aa).

153–160 (GVSRSGKT) provides a ligand contact to ADP.

This sequence belongs to the pyruvate, phosphate/water dikinase regulatory protein family. PSRP subfamily.

The enzyme catalyses [pyruvate, water dikinase] + ADP = [pyruvate, water dikinase]-phosphate + AMP + H(+). It carries out the reaction [pyruvate, water dikinase]-phosphate + phosphate + H(+) = [pyruvate, water dikinase] + diphosphate. Bifunctional serine/threonine kinase and phosphorylase involved in the regulation of the phosphoenolpyruvate synthase (PEPS) by catalyzing its phosphorylation/dephosphorylation. This is Putative phosphoenolpyruvate synthase regulatory protein from Polaromonas naphthalenivorans (strain CJ2).